Reading from the N-terminus, the 184-residue chain is Photosystem I assembly protein Ycf4 (184 aa).

2 helical membrane-spanning segments follow: residues 22–42 (FCWAFILFLGSLGFLLVGTSS) and 57–77 (IIFFPQGIVMSFYGIAGLFIS).

Belongs to the Ycf4 family.

It is found in the plastid. The protein resides in the chloroplast thylakoid membrane. In terms of biological role, seems to be required for the assembly of the photosystem I complex. The sequence is that of Photosystem I assembly protein Ycf4 from Draba nemorosa (Woodland whitlowgrass).